Consider the following 337-residue polypeptide: Formamidase (337 aa).

The CN hydrolase domain maps to 14 to 257; the sequence is VVIGLVQLQL…DEIITAEVRP (244 aa). Glutamate 60 acts as the Proton acceptor in catalysis. The Proton donor role is filled by lysine 129. Catalysis depends on cysteine 162, which acts as the Nucleophile.

Belongs to the carbon-nitrogen hydrolase superfamily. Aliphatic amidase family.

The catalysed reaction is formamide + H2O = formate + NH4(+). Its function is as follows. Is an aliphatic amidase with a restricted substrate specificity, as it only hydrolyzes formamide. The protein is Formamidase of Bradyrhizobium sp. (strain ORS 278).